A 269-amino-acid chain; its full sequence is Phosphate import ATP-binding protein PstB (269 aa).

Residues 14 to 253 (LSLENVSISY…EFNSTKKIFN (240 aa)) form the ABC transporter domain. 46–53 (GPSGCGKS) serves as a coordination point for ATP.

The protein belongs to the ABC transporter superfamily. Phosphate importer (TC 3.A.1.7) family. As to quaternary structure, the complex is composed of two ATP-binding proteins (PstB), two transmembrane proteins (PstC and PstA) and a solute-binding protein (PstS).

The protein resides in the cell inner membrane. It carries out the reaction phosphate(out) + ATP + H2O = ADP + 2 phosphate(in) + H(+). Part of the ABC transporter complex PstSACB involved in phosphate import. Responsible for energy coupling to the transport system. This is Phosphate import ATP-binding protein PstB from Prochlorococcus marinus (strain MIT 9312).